The chain runs to 314 residues: Aspartate carbamoyltransferase catalytic subunit (314 aa).

Arginine 58 and threonine 59 together coordinate carbamoyl phosphate. Lysine 86 contacts L-aspartate. 3 residues coordinate carbamoyl phosphate: arginine 108, histidine 136, and glutamine 139. Positions 169 and 223 each coordinate L-aspartate. The carbamoyl phosphate site is built by glycine 264 and proline 265.

Belongs to the aspartate/ornithine carbamoyltransferase superfamily. ATCase family. In terms of assembly, heterododecamer (2C3:3R2) of six catalytic PyrB chains organized as two trimers (C3), and six regulatory PyrI chains organized as three dimers (R2).

The catalysed reaction is carbamoyl phosphate + L-aspartate = N-carbamoyl-L-aspartate + phosphate + H(+). It functions in the pathway pyrimidine metabolism; UMP biosynthesis via de novo pathway; (S)-dihydroorotate from bicarbonate: step 2/3. In terms of biological role, catalyzes the condensation of carbamoyl phosphate and aspartate to form carbamoyl aspartate and inorganic phosphate, the committed step in the de novo pyrimidine nucleotide biosynthesis pathway. In Roseobacter denitrificans (strain ATCC 33942 / OCh 114) (Erythrobacter sp. (strain OCh 114)), this protein is Aspartate carbamoyltransferase catalytic subunit.